Consider the following 293-residue polypeptide: Ribulose bisphosphate carboxylase/oxygenase activase, chloroplastic (293 aa).

Residue 75 to 82 (PGTGKTTV) coordinates ATP.

This sequence belongs to the CbxX/CfxQ family. In terms of assembly, forms homooligomers. Forms heterohexameric rings with the nuclear-encoded Rca subunit consisting of 3 of each nuclear- and plastidial-encoded subunits that alternate in the ring.

It is found in the plastid. The protein resides in the chloroplast. In terms of biological role, required for the expression of ribulose 1,5-bisphosphate carboxylase/oxygenase (RuBisCo). ATPase involved in the activation of red-type RuBisCo, which tends to form inactive complexes with its substrate ribulose 1,5-bisphosphate (RuBP). Catalyzes the release of RuBP from inhibited RuBisCo in an ATP-dependent manner. Activation of RuBisCO involves the ATP-dependent carboxylation of the epsilon-amino group of lysine leading to a carbamate structure. The nuclear-encoded subunit plays a more critical role in activase function than the plastidial-encoded subunit. This is Ribulose bisphosphate carboxylase/oxygenase activase, chloroplastic from Cyanidioschyzon merolae (strain NIES-3377 / 10D) (Unicellular red alga).